The chain runs to 634 residues: Chaperone protein HtpG (634 aa).

The a; substrate-binding stretch occupies residues Met-1 to Arg-344. Residues Glu-345–Lys-561 are b. Residues Leu-562–Arg-634 are c.

It belongs to the heat shock protein 90 family. In terms of assembly, homodimer.

It is found in the cytoplasm. Its function is as follows. Molecular chaperone. Has ATPase activity. The sequence is that of Chaperone protein HtpG from Vibrio atlanticus (strain LGP32) (Vibrio splendidus (strain Mel32)).